The following is a 329-amino-acid chain: NAC domain-containing protein 71 (329 aa).

Residues L9–K166 form the NAC domain. The segment at R228–P281 is disordered. A compositionally biased stretch (basic and acidic residues) spans G230–T242.

As to quaternary structure, interacts with NAC048 and NAC002. In terms of tissue distribution, expressed in roots and embryo. Weakly expressed in callus.

The protein localises to the nucleus. Its function is as follows. Transcription activator that binds to the promoter of the stress response gene LEA19. Involved in tolerance to abiotic stresses. This Oryza sativa subsp. japonica (Rice) protein is NAC domain-containing protein 71.